Here is a 189-residue protein sequence, read N- to C-terminus: FUN14 domain-containing protein 2 (189 aa).

The Cytoplasmic segment spans residues 1-80 (METSAPRAGS…GQESGPSAEK (80 aa)). Phosphoserine occurs at positions 10 and 53. Residues 81–101 (YSVATQLFIGGVTGWCTGFIF) traverse the membrane as a helical segment. The Mitochondrial intermembrane segment spans residues 102–107 (QKVGKL). Residues 108–128 (AATAVGGGFFLLQLANHTGYI) traverse the membrane as a helical segment. Residues 129 to 164 (KVDWQRVEKDMKKAKEQLKIRKSNQIPTEVRSKAEE) lie on the Cytoplasmic side of the membrane. Serine 151 is subject to Phosphoserine. The chain crosses the membrane as a helical span at residues 165-185 (VVSFVKKNVLVTGGFFGGFLL). Residues 186–189 (GMAS) lie on the Mitochondrial intermembrane side of the membrane.

Belongs to the FUN14 family. As to expression, highly expressed in platelets (at protein level).

It is found in the mitochondrion outer membrane. The protein resides in the nucleus. Binds directly and specifically 1,2-Diacyl-sn-glycero-3-phospho-(1'-myo-inositol-3',4',5'-bisphosphate) (PIP3) leading to the recruitment of PIP3 to mitochondria and may play a role in the regulation of the platelet activation via AKT/GSK3B/cGMP signaling pathways. May act as transcription factor that regulates SREBP1 (isoform SREBP-1C) expression in order to modulate triglyceride (TG) homeostasis in hepatocytes. In Homo sapiens (Human), this protein is FUN14 domain-containing protein 2.